Reading from the N-terminus, the 758-residue chain is 5-methyltetrahydropteroyltriglutamate--homocysteine methyltransferase (758 aa).

Residues 17–20 (RELK) and lysine 117 contribute to the 5-methyltetrahydropteroyltri-L-glutamate site. Residues 434–436 (IGS) and glutamate 487 contribute to the L-homocysteine site. L-methionine is bound by residues 434–436 (IGS) and glutamate 487. Residues 518–519 (RC) and tryptophan 564 contribute to the 5-methyltetrahydropteroyltri-L-glutamate site. Residue aspartate 602 participates in L-homocysteine binding. An L-methionine-binding site is contributed by aspartate 602. Glutamate 608 contributes to the 5-methyltetrahydropteroyltri-L-glutamate binding site. Histidine 644, cysteine 646, and glutamate 668 together coordinate Zn(2+). Histidine 697 functions as the Proton donor in the catalytic mechanism. Position 729 (cysteine 729) interacts with Zn(2+).

This sequence belongs to the vitamin-B12 independent methionine synthase family. Zn(2+) is required as a cofactor.

The catalysed reaction is 5-methyltetrahydropteroyltri-L-glutamate + L-homocysteine = tetrahydropteroyltri-L-glutamate + L-methionine. It functions in the pathway amino-acid biosynthesis; L-methionine biosynthesis via de novo pathway; L-methionine from L-homocysteine (MetE route): step 1/1. In terms of biological role, catalyzes the transfer of a methyl group from 5-methyltetrahydrofolate to homocysteine resulting in methionine formation. The chain is 5-methyltetrahydropteroyltriglutamate--homocysteine methyltransferase from Yersinia pseudotuberculosis serotype O:1b (strain IP 31758).